A 289-amino-acid polypeptide reads, in one-letter code: MSLDQLPPLRDVIASHDLGAKKSFGQHFLLDLNLTAKIARLAGDMSRDQAIEVGPGPGGLTRAILAEGAASLLAVEMDSRFLGALDEINVASGGRLTVEQGDALEVDETALLTGPGDKVILSNLPYNVGTQLLIKWLQAEPIWWRRAVLMFQREVADRVVAQPGDKAYGRLAVISQSRCQAHLALKIPARAFTPPPKVESAVVVLDPLPEAQQFKDVVALERITASAFGQRRKTLRRSLAQAAGQGGTSADALLEEAGLNAGDRAEVIDITGFQSLARAWRAAYDAGRA.

S-adenosyl-L-methionine contacts are provided by histidine 27, leucine 29, glycine 54, glutamate 76, aspartate 102, and asparagine 123.

This sequence belongs to the class I-like SAM-binding methyltransferase superfamily. rRNA adenine N(6)-methyltransferase family. RsmA subfamily.

It is found in the cytoplasm. It carries out the reaction adenosine(1518)/adenosine(1519) in 16S rRNA + 4 S-adenosyl-L-methionine = N(6)-dimethyladenosine(1518)/N(6)-dimethyladenosine(1519) in 16S rRNA + 4 S-adenosyl-L-homocysteine + 4 H(+). Its function is as follows. Specifically dimethylates two adjacent adenosines (A1518 and A1519) in the loop of a conserved hairpin near the 3'-end of 16S rRNA in the 30S particle. May play a critical role in biogenesis of 30S subunits. In Maricaulis maris (strain MCS10) (Caulobacter maris), this protein is Ribosomal RNA small subunit methyltransferase A.